The chain runs to 436 residues: MTSVPIFESVSRFLPPANEDEQYWWKITGQHMARMMHEAGYPEDRQVECLLFHRFKVIPCLGPRPRSDTPWYKSRVGGGAADGCPINYSWRFGTADRKPHIRNFIEPLGALTNTPADPLNEVATKALLQDYSMTLPNVDLEAFWTFAPHYRPRIIEKADIEKLAGASLLVGAEMSPDSYTIDIKAYMYPRVPSQTSQLLTTILPQAMRDAYGENVCLDSLNFVHEFMTKDPQGSQLVLTGTTGIDCCKLQDTRVKIYVITRNTSFDHIAAIMTLGGRRPISEELLGQLKALWYELKGAPAELPSSEQLPVQTKPDGSKNPIVVPFYFDIQPRLALPDVKAYIDVSTSPVSDLAAANAVVRHLEQHGSGQNPKAYLNVLKDITPVEELETQKGVLAFYSVAVKKNELDITSYFNPQVYKRYFAHEVHLNGQRRSVFE.

The protein belongs to the tryptophan dimethylallyltransferase family.

The protein operates within secondary metabolite biosynthesis. Functionally, prenyltransferase; part of the gene cluster that mediates the biosynthesis of neosartoricin B, a prenylated anthracenone that probably exhibits T-cell antiproliferative activity, suggestive of a physiological role as an immunosuppressive agent. The non-reducing polyketide synthase nscA probably synthesizes and cyclizes the decaketide backbone. The hydrolase nscB then mediates the product release through hydrolysis followed by spontaneous decarboxylation. The prenyltransferase nscD catalyzes the addition of the dimethylallyl group to the aromatic C5. The FAD-dependent monooxygenase nscC is then responsible for the stereospecific hydroxylation at C2. Neosartoricin B can be converted into two additional compounds neosartoricins C and D. Neosartoricin C is a spirocyclic compound that is cyclized through the attack of C3 hydroxyl on C14, followed by dehydration. On the other hand, neosartoricin D is a further cyclized compound in which attack of C2 on C14 in neosartoricin C results in the formation of the acetal-containing dioxabicyclo-octanone ring. Both of these compounds are novel and possibly represent related metabolites of the gene cluster. The chain is Prenyltransferase nscD from Trichophyton tonsurans (strain CBS 112818) (Scalp ringworm fungus).